Consider the following 821-residue polypeptide: Leucine--tRNA ligase (821 aa).

The 'HIGH' region motif lies at 44 to 54 (PYPSGRIHMGH). The 'KMSKS' region signature appears at 589–593 (KMSKS). Residue Lys-592 participates in ATP binding.

This sequence belongs to the class-I aminoacyl-tRNA synthetase family.

It localises to the cytoplasm. The enzyme catalyses tRNA(Leu) + L-leucine + ATP = L-leucyl-tRNA(Leu) + AMP + diphosphate. The polypeptide is Leucine--tRNA ligase (Campylobacter concisus (strain 13826)).